A 325-amino-acid polypeptide reads, in one-letter code: Prenytransferase adrG (325 aa).

Transmembrane regions (helical) follow at residues 47-67 (LVGV…AVLL), 71-91 (MLLS…DDLI), 117-137 (ALLL…FLPW), 163-183 (PQIT…SLGL), 189-209 (MTPT…IDVI), 236-256 (LLSY…GVLT), and 258-278 (LGLP…WVLL).

This sequence belongs to the UbiA prenyltransferase family. Mg(2+) is required as a cofactor.

Its subcellular location is the membrane. It carries out the reaction 3,5-dimethylorsellinate + (2E,6E)-farnesyl diphosphate = (3R)-3-farnesyl-6-hydroxy-2,3,5-trimethyl-4-oxocyclohexa-1,5-diene-1-carboxylate + diphosphate + H(+). Its pathway is secondary metabolite biosynthesis; terpenoid biosynthesis. In terms of biological role, prenytransferase; part of the gene cluster that mediates the biosynthesis of andrastins, meroterpenoid compounds that exhibit inhibitory activity against ras farnesyltransferase, suggesting that they could be promising leads for antitumor agents. The first step of the pathway is the synthesis of 3,5-dimethylorsellinic acid (DMOA) by the polyketide synthase adrD via condensation of one acetyl-CoA starter unit with 3 malonyl-CoA units and 2 methylations. DMAO is then converted to farnesyl-DMAO by the prenyltransferase adrG. The methyltransferase adrK catalyzes the methylation of the carboxyl group of farnesyl-DMAO to farnesyl-DMAO methyl ester which is further converted to epoxyfarnesyl-DMAO methyl ester by the FAD-dependent monooxygenase adrH. The terpene cyclase adrI then catalyzes the carbon skeletal rearrangement to generate the andrastin E, the first compound in the pathway having the andrastin scaffold, with the tetracyclic ring system. The post-cyclization tailoring enzymes adrF, adrE, adrJ, and adrA, are involved in the conversion of andrastin E into andrastin A. The short chain dehydrogenase adrF is responsible for the oxidation of the C-3 a hydroxyl group of andrastin E to yield the corresponding ketone, andrastin D. The ketoreductase adrE stereoselectively reduces the carbonyl moiety to reverse the stereochemistry of the C-3 position to yield andrastin F. The acetyltransferase adrJ is the acetyltransferase that attaches the acetyl group to the C-3 hydroxyl group of andrastin F to yield andrastin C. Finally, the cytochrome P450 monooxygenase adrA catalyzes two sequential oxidation reactions of the C-23 methyl group, to generate the corresponding alcohol andrastin B, and aldehyde andrastin A. This Penicillium rubens (strain ATCC 28089 / DSM 1075 / NRRL 1951 / Wisconsin 54-1255) (Penicillium chrysogenum) protein is Prenytransferase adrG.